Here is a 419-residue protein sequence, read N- to C-terminus: UDP-N-acetylglucosamine 1-carboxyvinyltransferase (419 aa).

22-23 (KN) serves as a coordination point for phosphoenolpyruvate. Residue Arg93 participates in UDP-N-acetyl-alpha-D-glucosamine binding. Residue Cys117 is the Proton donor of the active site. Cys117 is modified (2-(S-cysteinyl)pyruvic acid O-phosphothioketal). 2 residues coordinate UDP-N-acetyl-alpha-D-glucosamine: Asp307 and Ile329.

Belongs to the EPSP synthase family. MurA subfamily.

It is found in the cytoplasm. The catalysed reaction is phosphoenolpyruvate + UDP-N-acetyl-alpha-D-glucosamine = UDP-N-acetyl-3-O-(1-carboxyvinyl)-alpha-D-glucosamine + phosphate. It participates in cell wall biogenesis; peptidoglycan biosynthesis. Functionally, cell wall formation. Adds enolpyruvyl to UDP-N-acetylglucosamine. This chain is UDP-N-acetylglucosamine 1-carboxyvinyltransferase, found in Shewanella sp. (strain MR-7).